Here is a 154-residue protein sequence, read N- to C-terminus: Ecotin-like protein 2 (154 aa).

This sequence belongs to the protease inhibitor I11 (ecotin) family.

This is Ecotin-like protein 2 from Trypanosoma brucei brucei (strain 927/4 GUTat10.1).